The following is a 341-amino-acid chain: Phosphoribosylformylglycinamidine cyclo-ligase (341 aa).

This sequence belongs to the AIR synthase family.

Its subcellular location is the cytoplasm. It catalyses the reaction 2-formamido-N(1)-(5-O-phospho-beta-D-ribosyl)acetamidine + ATP = 5-amino-1-(5-phospho-beta-D-ribosyl)imidazole + ADP + phosphate + H(+). Its pathway is purine metabolism; IMP biosynthesis via de novo pathway; 5-amino-1-(5-phospho-D-ribosyl)imidazole from N(2)-formyl-N(1)-(5-phospho-D-ribosyl)glycinamide: step 2/2. In Thermosynechococcus vestitus (strain NIES-2133 / IAM M-273 / BP-1), this protein is Phosphoribosylformylglycinamidine cyclo-ligase.